The sequence spans 802 residues: Mitochondrial inner membrane m-AAA protease component AFG3L2 (802 aa).

A mitochondrion-targeting transit peptide spans methionine 1–threonine 38. Residues leucine 39–cysteine 66 constitute a propeptide, removed in mature form. Residues tyrosine 76–serine 124 are disordered. Basic and acidic residues predominate over residues lysine 85–proline 99. Residue lysine 116 is modified to N6-succinyllysine. The next 2 helical transmembrane spans lie at phenylalanine 142–phenylalanine 162 and glycine 250–isoleucine 270. The ATP site is built by valine 309, alanine 310, threonine 351, glycine 352, lysine 353, threonine 354, leucine 355, and histidine 489. Residue histidine 573 coordinates Zn(2+). The active site involves glutamate 574. Zn(2+)-binding residues include histidine 577 and aspartate 648. The disordered stretch occupies residues valine 759 to serine 802. Residues tryptophan 778–serine 802 show a composition bias toward basic and acidic residues.

It in the N-terminal section; belongs to the AAA ATPase family. This sequence in the C-terminal section; belongs to the peptidase M41 family. Homohexamer. Forms heterohexamers with SPG7 and AFG3L1. The m-AAA protease is either composed of homohexamers of AFG3L2 or heterohexamers of AFG3L1, AFG3L2 and/or SPG7. Interacts with MAIP1. Interacts with DNAJC19. Interacts with PHB2. Zn(2+) serves as cofactor. Upon import into the mitochondrion, the N-terminal transit peptide is cleaved to generate an intermediate form which undergoes autocatalytic proteolytic processing to generate the proteolytically active mature form. Highly expressed in the cerebellar Purkinje cells.

It localises to the mitochondrion inner membrane. The catalysed reaction is ATP + H2O = ADP + phosphate + H(+). Functionally, catalytic component of the m-AAA protease, a protease that plays a key role in proteostasis of inner mitochondrial membrane proteins, and which is essential for axonal and neuron development. AFG3L2 possesses both ATPase and protease activities: the ATPase activity is required to unfold substrates, threading them into the internal proteolytic cavity for hydrolysis into small peptide fragments. The m-AAA protease carries out protein quality control in the inner membrane of the mitochondria by mediating degradation of mistranslated or misfolded polypeptides. The m-AAA protease complex also promotes the processing and maturation of mitochondrial proteins, such as MRPL32/bL32m, PINK1 and SP7. Mediates protein maturation of the mitochondrial ribosomal subunit MRPL32/bL32m by catalyzing the cleavage of the presequence of MRPL32/bL32m prior to assembly into the mitochondrial ribosome. Required for SPG7 maturation into its active mature form after SPG7 cleavage by mitochondrial-processing peptidase (MPP). Required for the maturation of PINK1 into its 52kDa mature form after its cleavage by mitochondrial-processing peptidase (MPP). Acts as a regulator of calcium in neurons by mediating degradation of SMDT1/EMRE before its assembly with the uniporter complex, limiting the availability of SMDT1/EMRE for MCU assembly and promoting efficient assembly of gatekeeper subunits with MCU. Promotes the proteolytic degradation of GHITM upon hyperpolarization of mitochondria: progressive GHITM degradation leads to respiratory complex I degradation and broad reshaping of the mitochondrial proteome by AFG3L2. Also acts as a regulator of mitochondrial glutathione homeostasis by mediating cleavage and degradation of SLC25A39. SLC25A39 cleavage is prevented when SLC25A39 binds iron-sulfur. Involved in the regulation of OMA1-dependent processing of OPA1. May act by mediating processing of OMA1 precursor, participating in OMA1 maturation. The chain is Mitochondrial inner membrane m-AAA protease component AFG3L2 from Mus musculus (Mouse).